The primary structure comprises 596 residues: MRTHYCNGIHEGLIGQTVTLCGWAQRRRDHGGVIFIDLRDREGLVQIVADPDQVDAFAAANECRSEFVLQVEGVLRARPAGTENPHMPSGKVELAAARIRILNRSEPVPFPLDEEDIAENLRLKYRYLDLRRPEMLHRLRLRHQVTRFVRGYLDNAGFIDVETPVLTRSTPEGARDYLVPSRTQPGHFFALPQSPQLFKQLLMVAGLDRYYQITKCFRDEDLRADRQPEFTQIDIEASFVDEEAVMGTAEPMIRGLFAEVLGVQLPDPFPRMTYRDAMHRFGVDRPDLRNPLELTELTDLMRAVDFKVFREAAERPHGRVACLRVPGGAQLSRAQIDAYTQFTAIYGARGLAWIKVNALDQGNEGLQSPIVKFLPEMVLSEILRRSGAAAGDILFFGADTAKIVNEALGNLRNRVAADLGLLEGEWCPVWITDFPMFDYDDKEDRWTSTHHPFTAPQTEHLETLGQDPGNALARAYDLVLNGNEIGGGSIRIHQEAVQEKVFAALGIGAEEARDKFGFLLDALHYGAPPHGGLAFGLDRLVMLLCGAETIRDVIAFPKTQKAGCLLTEAPGTVADKQLQELGIRLRPGVGGGVPNP.

E172 lines the L-aspartate pocket. Residues 196–199 (QLFK) form an aspartate region. R218 contacts L-aspartate. Residues 218–220 (RDE) and Q227 each bind ATP. H450 contacts L-aspartate. E484 provides a ligand contact to ATP. R491 serves as a coordination point for L-aspartate. 536–539 (GLDR) is an ATP binding site.

It belongs to the class-II aminoacyl-tRNA synthetase family. Type 1 subfamily. As to quaternary structure, homodimer.

Its subcellular location is the cytoplasm. The enzyme catalyses tRNA(Asx) + L-aspartate + ATP = L-aspartyl-tRNA(Asx) + AMP + diphosphate. Its function is as follows. Aspartyl-tRNA synthetase with relaxed tRNA specificity since it is able to aspartylate not only its cognate tRNA(Asp) but also tRNA(Asn). Reaction proceeds in two steps: L-aspartate is first activated by ATP to form Asp-AMP and then transferred to the acceptor end of tRNA(Asp/Asn). This is Aspartate--tRNA(Asp/Asn) ligase from Acidithiobacillus ferrooxidans (strain ATCC 23270 / DSM 14882 / CIP 104768 / NCIMB 8455) (Ferrobacillus ferrooxidans (strain ATCC 23270)).